A 522-amino-acid polypeptide reads, in one-letter code: Lysine--tRNA ligase (522 aa).

Residues 44–52 (PSGLPHIGT) carry the 'HIGH' region motif. Positions 290 to 294 (KISKS) match the 'KMSKS' region motif. An ATP-binding site is contributed by Lys-293.

This sequence belongs to the class-I aminoacyl-tRNA synthetase family.

It localises to the cytoplasm. The catalysed reaction is tRNA(Lys) + L-lysine + ATP = L-lysyl-tRNA(Lys) + AMP + diphosphate. This Rickettsia bellii (strain RML369-C) protein is Lysine--tRNA ligase.